The chain runs to 241 residues: Octanoyltransferase (241 aa).

In terms of domain architecture, BPL/LPL catalytic spans 43–228; it reads ADTPDEIWLV…RLTANLDGSP (186 aa). Residues 83–90, 159–161, and 172–174 each bind substrate; these read RGGQITYH, ALG, and GVS. Catalysis depends on C190, which acts as the Acyl-thioester intermediate.

Belongs to the LipB family.

Its subcellular location is the cytoplasm. The enzyme catalyses octanoyl-[ACP] + L-lysyl-[protein] = N(6)-octanoyl-L-lysyl-[protein] + holo-[ACP] + H(+). Its pathway is protein modification; protein lipoylation via endogenous pathway; protein N(6)-(lipoyl)lysine from octanoyl-[acyl-carrier-protein]: step 1/2. Functionally, catalyzes the transfer of endogenously produced octanoic acid from octanoyl-acyl-carrier-protein onto the lipoyl domains of lipoate-dependent enzymes. Lipoyl-ACP can also act as a substrate although octanoyl-ACP is likely to be the physiological substrate. The chain is Octanoyltransferase from Paraburkholderia phytofirmans (strain DSM 17436 / LMG 22146 / PsJN) (Burkholderia phytofirmans).